A 545-amino-acid chain; its full sequence is Chaperonin GroEL (545 aa).

ATP-binding positions include 30–33, Lys51, 87–91, Gly415, 479–481, and Asp495; these read TLGP, DGTTT, and NAA. The tract at residues 526 to 545 is disordered; that stretch reads KEDKPDLGNAGAGGNMGGMM. A compositionally biased stretch (gly residues) spans 535-545; it reads AGAGGNMGGMM.

This sequence belongs to the chaperonin (HSP60) family. As to quaternary structure, forms a cylinder of 14 subunits composed of two heptameric rings stacked back-to-back. Interacts with the co-chaperonin GroES.

The protein resides in the cytoplasm. The catalysed reaction is ATP + H2O + a folded polypeptide = ADP + phosphate + an unfolded polypeptide.. In terms of biological role, together with its co-chaperonin GroES, plays an essential role in assisting protein folding. The GroEL-GroES system forms a nano-cage that allows encapsulation of the non-native substrate proteins and provides a physical environment optimized to promote and accelerate protein folding. The polypeptide is Chaperonin GroEL (Blochmanniella pennsylvanica (strain BPEN)).